A 144-amino-acid chain; its full sequence is Translation initiation factor 5A (144 aa).

Lysine 38 bears the Hypusine mark.

Belongs to the eIF-5A family.

It is found in the cytoplasm. Functions by promoting the formation of the first peptide bond. The protein is Translation initiation factor 5A of Nanoarchaeum equitans (strain Kin4-M).